Reading from the N-terminus, the 165-residue chain is Endoribonuclease YbeY (165 aa).

Residues His126, His130, and His136 each coordinate Zn(2+).

Belongs to the endoribonuclease YbeY family. Requires Zn(2+) as cofactor.

The protein localises to the cytoplasm. In terms of biological role, single strand-specific metallo-endoribonuclease involved in late-stage 70S ribosome quality control and in maturation of the 3' terminus of the 16S rRNA. The polypeptide is Endoribonuclease YbeY (Ruegeria pomeroyi (strain ATCC 700808 / DSM 15171 / DSS-3) (Silicibacter pomeroyi)).